The primary structure comprises 146 residues: MAGEGRQLFCRLITPERVVYDGEADLVVAKIADGEIGVMVDHYPVISTVDFWDVRITRGEERRVYATSDGFFKVADNLVQILVEEAVPASEINVEEAEHRIEQAERELGQLPEEEDEDSRRAREEISRRVRLGENLVRVARRYGGG.

The tract at residues 103 to 124 (QAERELGQLPEEEDEDSRRARE) is disordered.

Belongs to the ATPase epsilon chain family. In terms of assembly, F-type ATPases have 2 components, CF(1) - the catalytic core - and CF(0) - the membrane proton channel. CF(1) has five subunits: alpha(3), beta(3), gamma(1), delta(1), epsilon(1). CF(0) has three main subunits: a, b and c.

The protein localises to the cell membrane. Its function is as follows. Produces ATP from ADP in the presence of a proton gradient across the membrane. This chain is ATP synthase epsilon chain, found in Rubrobacter xylanophilus (strain DSM 9941 / JCM 11954 / NBRC 16129 / PRD-1).